A 206-amino-acid chain; its full sequence is Small ribosomal subunit protein uS4 (206 aa).

Positions 96–156 constitute an S4 RNA-binding domain; that stretch reads RRLDNVVYRM…DKSKNQSRIK (61 aa).

Belongs to the universal ribosomal protein uS4 family. Part of the 30S ribosomal subunit. Contacts protein S5. The interaction surface between S4 and S5 is involved in control of translational fidelity.

Its function is as follows. One of the primary rRNA binding proteins, it binds directly to 16S rRNA where it nucleates assembly of the body of the 30S subunit. With S5 and S12 plays an important role in translational accuracy. In Buchnera aphidicola subsp. Schizaphis graminum (strain Sg), this protein is Small ribosomal subunit protein uS4.